We begin with the raw amino-acid sequence, 622 residues long: Low affinity potassium transport system protein Kup (622 aa).

12 helical membrane-spanning segments follow: residues 9–29 (LPAI…TSPL), 49–69 (VFGF…IKYL), 103–123 (VIMG…TPAI), 137–157 (PQLD…LFMI), 165–185 (VGKL…VLGL), 213–233 (VSFI…ALYA), 247–267 (WFTV…ALLL), 276–296 (PFFL…AALA), 337–357 (IYIP…IVSF), 363–383 (LAAA…ILST), 396–416 (FVAL…SANL), and 419–439 (LLSG…IMTT).

It belongs to the HAK/KUP transporter (TC 2.A.72) family.

The protein resides in the cell inner membrane. The enzyme catalyses K(+)(in) + H(+)(in) = K(+)(out) + H(+)(out). Its function is as follows. Responsible for the low-affinity transport of potassium into the cell. Likely operates as a K(+):H(+) symporter. The polypeptide is Low affinity potassium transport system protein Kup (Salmonella paratyphi B (strain ATCC BAA-1250 / SPB7)).